A 232-amino-acid chain; its full sequence is Chaperone protein LpfB (232 aa).

The N-terminal stretch at 1–23 (MNRSRLISCTALVLALIAQNSFA) is a signal peptide.

Belongs to the periplasmic pilus chaperone family.

It is found in the periplasm. Required for the biogenesis of long polar fimbria; binds and interact with LpfA. In Salmonella typhimurium (strain LT2 / SGSC1412 / ATCC 700720), this protein is Chaperone protein LpfB (lpfB).